The following is a 100-amino-acid chain: Large ribosomal subunit protein bL27 (100 aa).

The propeptide occupies 1–13 (MNKLYWLTDLQLF). A disordered region spans residues 17–39 (KGVGSSKNGRDSNPKYLGAKLGD).

The protein belongs to the bacterial ribosomal protein bL27 family. In terms of processing, the N-terminus is cleaved by ribosomal processing cysteine protease Prp.

The sequence is that of Large ribosomal subunit protein bL27 from Ureaplasma parvum serovar 3 (strain ATCC 700970).